The sequence spans 323 residues: Germination protease (323 aa).

Residues 1–6 constitute a propeptide that is removed on maturation; that stretch reads MSVRTD.

It belongs to the peptidase A25 family. As to quaternary structure, homotetramer. Post-translationally, autoproteolytically processed. The inactive tetrameric zymogen termed p46 autoprocesses to a smaller form termed p41, which is active only during spore germination.

It carries out the reaction Endopeptidase action with P4 Glu or Asp, P1 preferably Glu &gt; Asp, P1' hydrophobic and P2' Ala.. In terms of biological role, initiates the rapid degradation of small, acid-soluble proteins during spore germination. This chain is Germination protease, found in Clostridium tetani (strain Massachusetts / E88).